We begin with the raw amino-acid sequence, 422 residues long: MTNLLEDLSFRGLIQQMTDEEGLNKQLNEEKIRLYSGFDPTADSLHIGHLLPILTLRRFQLAGHHPIALVGGATGLIGDPSGKKAERTLNTADIVSEWSQKIKNQLSRFLDFEAAENPAVIANNFDWIGKMNVIDFLRDVGKNFGINYMLAKDTVSSRIESGISYTEFSYMILQSYDFLNLYRDKNCKLQIGGSDQWGNITAGLELIRKSEEEGAKAFGLTIPLVTKADGTKFGKTEGGAIWLDKEKTSPYEFYQFWINTDDRDVVKYLKYFTFLSKEEIEAYAEKTETAPEKREAQKRLAEEVTSLVHGREALEQAINISQALFSGNIKELSAQDVKVGFKDVPSMEVDSTQELSLVDVLVQSKLSPSKRQAREDIQNGAVYINGERQTEINYTLSGEDRIENQFTVLRRGKKKYFLVTYK.

Tyr35 contributes to the L-tyrosine binding site. The short motif at 40–49 is the 'HIGH' region element; that stretch reads PTADSLHIGH. Positions 170 and 174 each coordinate L-tyrosine. Residues 232 to 236 carry the 'KMSKS' region motif; that stretch reads KFGKT. Residue Lys235 participates in ATP binding. In terms of domain architecture, S4 RNA-binding spans 355–421; it reads LSLVDVLVQS…GKKKYFLVTY (67 aa).

The protein belongs to the class-I aminoacyl-tRNA synthetase family. TyrS type 1 subfamily. As to quaternary structure, homodimer.

It localises to the cytoplasm. The catalysed reaction is tRNA(Tyr) + L-tyrosine + ATP = L-tyrosyl-tRNA(Tyr) + AMP + diphosphate + H(+). Functionally, catalyzes the attachment of tyrosine to tRNA(Tyr) in a two-step reaction: tyrosine is first activated by ATP to form Tyr-AMP and then transferred to the acceptor end of tRNA(Tyr). The chain is Tyrosine--tRNA ligase 1 from Bacillus subtilis (strain 168).